The following is a 405-amino-acid chain: Probable tRNA sulfurtransferase (405 aa).

The THUMP domain occupies 60-165 (TAVMDRLKGV…LNGVFLSGQT (106 aa)). Residues 183–184 (ML), 208–209 (HF), arginine 265, glycine 287, and glutamine 296 each bind ATP.

This sequence belongs to the ThiI family.

The protein resides in the cytoplasm. The catalysed reaction is [ThiI sulfur-carrier protein]-S-sulfanyl-L-cysteine + a uridine in tRNA + 2 reduced [2Fe-2S]-[ferredoxin] + ATP + H(+) = [ThiI sulfur-carrier protein]-L-cysteine + a 4-thiouridine in tRNA + 2 oxidized [2Fe-2S]-[ferredoxin] + AMP + diphosphate. The enzyme catalyses [ThiS sulfur-carrier protein]-C-terminal Gly-Gly-AMP + S-sulfanyl-L-cysteinyl-[cysteine desulfurase] + AH2 = [ThiS sulfur-carrier protein]-C-terminal-Gly-aminoethanethioate + L-cysteinyl-[cysteine desulfurase] + A + AMP + 2 H(+). The protein operates within cofactor biosynthesis; thiamine diphosphate biosynthesis. Catalyzes the ATP-dependent transfer of a sulfur to tRNA to produce 4-thiouridine in position 8 of tRNAs, which functions as a near-UV photosensor. Also catalyzes the transfer of sulfur to the sulfur carrier protein ThiS, forming ThiS-thiocarboxylate. This is a step in the synthesis of thiazole, in the thiamine biosynthesis pathway. The sulfur is donated as persulfide by IscS. In Levilactobacillus brevis (strain ATCC 367 / BCRC 12310 / CIP 105137 / JCM 1170 / LMG 11437 / NCIMB 947 / NCTC 947) (Lactobacillus brevis), this protein is Probable tRNA sulfurtransferase.